Here is a 253-residue protein sequence, read N- to C-terminus: MKSAWMEKTYTIDGCAFHTQHRKGSSGVTIVFEAGYGTSSETWKPLMADIDDEFGIFTYDRAGIGKSGQSRAKRTADQQVKELESLLKAADVKPPYLAVSHSYGAVITGLWACKNKHDIIGMVLLDPALGDCASFTFIPEEMHKSHTRKMMLEGTHAEFSKSLQELKKRQVHLGNMPLLVLSSGERTEKFAAEQEWQNLHSSILSLSNQSGWIQAKNSSHNIHHDEPHIVHLAIYDVWCAACQQAAPLYQAVN.

This is an uncharacterized protein from Bacillus subtilis (strain 168).